A 272-amino-acid chain; its full sequence is SPbeta prophage-derived aminoglycoside N(3')-acetyltransferase-like protein YokD (272 aa).

Residues L38–V44 and Q113 each bind CoA.

Belongs to the antibiotic N-acetyltransferase family. In terms of assembly, homodimer.

In terms of biological role, may contribute to antibiotic resistance. The sequence is that of SPbeta prophage-derived aminoglycoside N(3')-acetyltransferase-like protein YokD (yokD) from Bacillus subtilis (strain 168).